The chain runs to 339 residues: Undecaprenyl-phosphate 4-deoxy-4-formamido-L-arabinose transferase (339 aa).

2 consecutive transmembrane segments (helical) span residues 235–255 (LSLVGGGMALAGFLFALFLLV) and 269–289 (LFVLFAVLFMFSGVQLLGMGL).

Belongs to the glycosyltransferase 2 family.

It localises to the cell inner membrane. It catalyses the reaction UDP-4-deoxy-4-formamido-beta-L-arabinose + di-trans,octa-cis-undecaprenyl phosphate = 4-deoxy-4-formamido-alpha-L-arabinopyranosyl di-trans,octa-cis-undecaprenyl phosphate + UDP. It functions in the pathway glycolipid biosynthesis; 4-amino-4-deoxy-alpha-L-arabinose undecaprenyl phosphate biosynthesis; 4-amino-4-deoxy-alpha-L-arabinose undecaprenyl phosphate from UDP-4-deoxy-4-formamido-beta-L-arabinose and undecaprenyl phosphate: step 1/2. The protein operates within bacterial outer membrane biogenesis; lipopolysaccharide biosynthesis. In terms of biological role, catalyzes the transfer of 4-deoxy-4-formamido-L-arabinose from UDP to undecaprenyl phosphate. The modified arabinose is attached to lipid A and is required for resistance to polymyxin and cationic antimicrobial peptides. This is Undecaprenyl-phosphate 4-deoxy-4-formamido-L-arabinose transferase from Pseudomonas aeruginosa (strain UCBPP-PA14).